We begin with the raw amino-acid sequence, 440 residues long: UDP-N-acetylmuramoylalanine--D-glutamate ligase (440 aa).

109 to 115 (GTNGKTT) contacts ATP.

It belongs to the MurCDEF family.

It localises to the cytoplasm. The catalysed reaction is UDP-N-acetyl-alpha-D-muramoyl-L-alanine + D-glutamate + ATP = UDP-N-acetyl-alpha-D-muramoyl-L-alanyl-D-glutamate + ADP + phosphate + H(+). It participates in cell wall biogenesis; peptidoglycan biosynthesis. Its function is as follows. Cell wall formation. Catalyzes the addition of glutamate to the nucleotide precursor UDP-N-acetylmuramoyl-L-alanine (UMA). This is UDP-N-acetylmuramoylalanine--D-glutamate ligase from Rubrobacter xylanophilus (strain DSM 9941 / JCM 11954 / NBRC 16129 / PRD-1).